Consider the following 219-residue polypeptide: UPF0319 protein MS0844 (219 aa).

Positions 1–21 are cleaved as a signal peptide; it reads MKFRLTALAVAALLTSTASFA.

It belongs to the UPF0319 family.

This is UPF0319 protein MS0844 from Mannheimia succiniciproducens (strain KCTC 0769BP / MBEL55E).